The chain runs to 341 residues: tRNA N6-adenosine threonylcarbamoyltransferase (341 aa).

Fe cation-binding residues include H111 and H115. Substrate contacts are provided by residues 134–138 (LVSGG), D167, G180, and N276. D304 contributes to the Fe cation binding site.

It belongs to the KAE1 / TsaD family. Fe(2+) serves as cofactor.

It localises to the cytoplasm. It carries out the reaction L-threonylcarbamoyladenylate + adenosine(37) in tRNA = N(6)-L-threonylcarbamoyladenosine(37) in tRNA + AMP + H(+). In terms of biological role, required for the formation of a threonylcarbamoyl group on adenosine at position 37 (t(6)A37) in tRNAs that read codons beginning with adenine. Is involved in the transfer of the threonylcarbamoyl moiety of threonylcarbamoyl-AMP (TC-AMP) to the N6 group of A37, together with TsaE and TsaB. TsaD likely plays a direct catalytic role in this reaction. This chain is tRNA N6-adenosine threonylcarbamoyltransferase, found in Pseudomonas fluorescens (strain SBW25).